Here is a 474-residue protein sequence, read N- to C-terminus: Crocetin glucosyltransferase, chloroplastic (474 aa).

Residues 1-45 constitute a chloroplast transit peptide; it reads MVQQRHVLLITYPAQGHINPALQFAQRLLRMGIQVTLATSVYALS. The Proton acceptor role is filled by H17. H17 contributes to the an anthocyanidin binding site. Q346, H361, W364, N365, S366, E369, D385, and Q386 together coordinate UDP-alpha-D-glucose.

This sequence belongs to the UDP-glycosyltransferase family. Ubiquitous.

The protein localises to the plastid. Its subcellular location is the chloroplast. The catalysed reaction is crocetin + UDP-alpha-D-glucose = beta-D-glucosyl crocetin + UDP. It catalyses the reaction beta-D-glucosyl crocetin + UDP-alpha-D-glucose = bis(beta-D-glucosyl) crocetin + UDP. The enzyme catalyses beta-D-gentiobiosyl crocetin + UDP-alpha-D-glucose = beta-D-gentiobiosyl beta-D-glucosyl crocetin + UDP. Glucosyltransferase acting on a broad range of substrates, including crocetin, 4-coumaric acid, caffeic acid and ferulic acid. No activity with indol-3-acetic acid, bixin and norbixin, and no formation of O-glucosides. Involved with UGT94E5 in sequential glycosylation of crocetin to crocin (bis(beta-D-gentiobiosyl) crocetin). This is Crocetin glucosyltransferase, chloroplastic (UGT75L6) from Gardenia jasminoides (Cape jasmine).